The primary structure comprises 203 residues: Small ribosomal subunit protein uS5 (203 aa).

Residues 51–114 (LEDEVLDITM…ENAKLNVVRI (64 aa)) enclose the S5 DRBM domain.

It belongs to the universal ribosomal protein uS5 family. Part of the 30S ribosomal subunit. Contacts protein S4.

In terms of biological role, with S4 and S12 plays an important role in translational accuracy. The polypeptide is Small ribosomal subunit protein uS5 (Methanothrix thermoacetophila (strain DSM 6194 / JCM 14653 / NBRC 101360 / PT) (Methanosaeta thermophila)).